A 192-amino-acid polypeptide reads, in one-letter code: Transcriptional activator GvpE (192 aa).

140–145 (KRKVYR) contacts DNA. The interval 150 to 181 (EATFDTVEPAVNRLVTFSLVLKALMIDCNARY) is leucine-zipper.

In terms of assembly, interacts with GvpD, also with c-GvpD from H.salinarum.

The protein resides in the cytoplasm. The amount of protein that accumulates is controlled by GvpD; GvpD causes a reduction in the amount of GvpE, preventing accumulation of excessive amounts of gas vesicles. Functionally, plays a regulatory role in gas vesicle synthesis, activates transcription of the gvpA operon, and probably of the gvpD operon. Gas vesicles are hollow, gas filled proteinaceous nanostructures found in some microorganisms. They allow positioning of halobacteria at the optimal depth for growth in the poorly aerated, shallow brine pools of their habitat. In terms of biological role, expression of a 9.5 kb mc-vac DNA fragment containing 2 divergently transcribed regions (gvpD-gvpE-gvpF-gvpG-gvpH-gvpI-gvpJ-gvpK-gvpL-gvpM and gvpA-gvpC-gvpN-gvpO) allows H.volcanii to produce gas vesicles. The chain is Transcriptional activator GvpE from Haloferax mediterranei (strain ATCC 33500 / DSM 1411 / JCM 8866 / NBRC 14739 / NCIMB 2177 / R-4) (Halobacterium mediterranei).